Consider the following 548-residue polypeptide: Chaperonin GroEL (548 aa).

ATP contacts are provided by residues 30 to 33 (TLGP), Lys-51, 87 to 91 (DGTTT), Gly-415, and Asp-496.

It belongs to the chaperonin (HSP60) family. Forms a cylinder of 14 subunits composed of two heptameric rings stacked back-to-back. Interacts with the co-chaperonin GroES.

It is found in the cytoplasm. It carries out the reaction ATP + H2O + a folded polypeptide = ADP + phosphate + an unfolded polypeptide.. Together with its co-chaperonin GroES, plays an essential role in assisting protein folding. The GroEL-GroES system forms a nano-cage that allows encapsulation of the non-native substrate proteins and provides a physical environment optimized to promote and accelerate protein folding. The chain is Chaperonin GroEL from Haemophilus influenzae (strain PittGG).